The sequence spans 384 residues: Lipid-A-disaccharide synthase 1 (384 aa).

It belongs to the LpxB family.

The catalysed reaction is a lipid X + a UDP-2-N,3-O-bis[(3R)-3-hydroxyacyl]-alpha-D-glucosamine = a lipid A disaccharide + UDP + H(+). Its pathway is bacterial outer membrane biogenesis; LPS lipid A biosynthesis. Its function is as follows. Condensation of UDP-2,3-diacylglucosamine and 2,3-diacylglucosamine-1-phosphate to form lipid A disaccharide, a precursor of lipid A, a phosphorylated glycolipid that anchors the lipopolysaccharide to the outer membrane of the cell. The sequence is that of Lipid-A-disaccharide synthase 1 from Legionella pneumophila (strain Paris).